The chain runs to 128 residues: MQQTGLTLALVALAVCVALPSSEAILPIASSCCTEVSHHISRRLLERVNICRIQRADGDCDLAAVILHVRRRRLCVSPHSHVIKQWMKEQAAKKNTKGNICHKKQAGKRKSKGAHQEKPEIHSHKSPY.

The signal sequence occupies residues 1–24 (MQQTGLTLALVALAVCVALPSSEA). 2 disulfides stabilise this stretch: cysteine 32–cysteine 60 and cysteine 33–cysteine 75. A disordered region spans residues 89–128 (EQAAKKNTKGNICHKKQAGKRKSKGAHQEKPEIHSHKSPY). The span at 94–113 (KNTKGNICHKKQAGKRKSKG) shows a compositional bias: basic residues. The span at 114–128 (AHQEKPEIHSHKSPY) shows a compositional bias: basic and acidic residues.

The protein belongs to the intercrine beta (chemokine CC) family.

The protein resides in the secreted. Functionally, chemotactic activity for resting CD4, CD8 T-cells and eosinophils. Binds to CCR3 and CCR10 and induces calcium mobilization in a dose-dependent manner. The sequence is that of C-C motif chemokine 28 (CCL28) from Canis lupus familiaris (Dog).